The primary structure comprises 691 residues: Elongation factor G (691 aa).

In terms of domain architecture, tr-type G spans 8–283; that stretch reads KKVRNIGIAA…AVVAYLPAPD (276 aa). Residues 17 to 24, 81 to 85, and 135 to 138 each bind GTP; these read AHIDAGKT, DTPGH, and NKMD.

Belongs to the TRAFAC class translation factor GTPase superfamily. Classic translation factor GTPase family. EF-G/EF-2 subfamily.

It is found in the cytoplasm. Its function is as follows. Catalyzes the GTP-dependent ribosomal translocation step during translation elongation. During this step, the ribosome changes from the pre-translocational (PRE) to the post-translocational (POST) state as the newly formed A-site-bound peptidyl-tRNA and P-site-bound deacylated tRNA move to the P and E sites, respectively. Catalyzes the coordinated movement of the two tRNA molecules, the mRNA and conformational changes in the ribosome. This is Elongation factor G from Campylobacter jejuni subsp. jejuni serotype O:23/36 (strain 81-176).